The chain runs to 296 residues: Glycine--tRNA ligase alpha subunit (296 aa).

Belongs to the class-II aminoacyl-tRNA synthetase family. In terms of assembly, tetramer of two alpha and two beta subunits.

It is found in the cytoplasm. The enzyme catalyses tRNA(Gly) + glycine + ATP = glycyl-tRNA(Gly) + AMP + diphosphate. In Listeria monocytogenes serotype 4b (strain CLIP80459), this protein is Glycine--tRNA ligase alpha subunit.